Here is a 1005-residue protein sequence, read N- to C-terminus: Espin-like protein (1005 aa).

9 ANK repeats span residues Met-1–Ile-31, Leu-35–Asn-64, Asn-69–Asp-99, Ser-103–Leu-132, Glu-136–Arg-166, Ser-170–Leu-200, Asp-204–Ala-234, Glu-238–Arg-267, and Trp-270–Leu-299. Disordered stretches follow at residues Leu-333–Gln-444 and Leu-462–Ala-483. Pro residues predominate over residues Met-334–Leu-346. Positions Ala-468–Thr-480 are enriched in polar residues. The stretch at Leu-517–Leu-541 forms a coiled coil. 3 disordered regions span residues Gly-616–Gln-644, Arg-695–Gly-730, and Leu-773–Gly-795.

In terms of assembly, interacts with MYO3A (via C-terminus). Interacts with MYO3B (via C-terminus).

Its subcellular location is the cell projection. The protein resides in the stereocilium. Functionally, binds to but does not cross-link actin. Required for the formation and maintenance of inner ear hair cell stereocilia and staircase formation. Essential for normal hearing. The polypeptide is Espin-like protein (ESPNL) (Homo sapiens (Human)).